The chain runs to 572 residues: RNA polymerase sigma factor sigB (572 aa).

The transit peptide at 1-39 (MSSCLLPQFKCPPDSFSIHFRTSFCAPKHNKGSVFFQPQ) directs the protein to the chloroplast. The tract at residues 215-249 (TRQTERKARRAKGLEKTASGIPSVKTGSSPKKKRL) is disordered. The Polymerase core binding signature appears at 360–373 (DLVQEGCRGLVRGA). The segment at residues 530-549 (LQEIGEMMGVSRERVRQIES) is a DNA-binding region (H-T-H motif).

This sequence belongs to the sigma-70 factor family. Highly expressed in cotyledons, to a lesser extent in leaves, sepals and siliques, and barely expressed in roots. Present in seedlings.

It is found in the plastid. The protein resides in the chloroplast. Required for the transition of plastids into chloroplasts by coordinating nuclear and chloroplastic genomes under light conditions. Sigma factors are initiation factors that promote the attachment of plastid-encoded RNA polymerase (PEP) to specific initiation sites and are then released. Promotes the biosynthesis of plastid-encoded tRNAs (e.g. trnE-UUC and trnV-UAC). In Arabidopsis thaliana (Mouse-ear cress), this protein is RNA polymerase sigma factor sigB (SIGB).